A 314-amino-acid chain; its full sequence is DNA-directed RNA polymerase subunit alpha (314 aa).

Positions 1 to 228 (MIEFEKPNIH…DHLSIFVNLT (228 aa)) are alpha N-terminal domain (alpha-NTD). Positions 245–314 (KEKMLEMTIE…DLGLSLRKED (70 aa)) are alpha C-terminal domain (alpha-CTD).

The protein belongs to the RNA polymerase alpha chain family. In terms of assembly, homodimer. The RNAP catalytic core consists of 2 alpha, 1 beta, 1 beta' and 1 omega subunit. When a sigma factor is associated with the core the holoenzyme is formed, which can initiate transcription.

It catalyses the reaction RNA(n) + a ribonucleoside 5'-triphosphate = RNA(n+1) + diphosphate. In terms of biological role, DNA-dependent RNA polymerase catalyzes the transcription of DNA into RNA using the four ribonucleoside triphosphates as substrates. This Lactiplantibacillus plantarum (strain ATCC BAA-793 / NCIMB 8826 / WCFS1) (Lactobacillus plantarum) protein is DNA-directed RNA polymerase subunit alpha.